Reading from the N-terminus, the 360-residue chain is DNA replication and repair protein RecF (360 aa).

ATP is bound at residue 30-37 (GQNGSGKT).

This sequence belongs to the RecF family.

Its subcellular location is the cytoplasm. In terms of biological role, the RecF protein is involved in DNA metabolism; it is required for DNA replication and normal SOS inducibility. RecF binds preferentially to single-stranded, linear DNA. It also seems to bind ATP. In Shewanella sp. (strain MR-4), this protein is DNA replication and repair protein RecF.